The sequence spans 857 residues: Inactive rhomboid protein 1 (857 aa).

The Cytoplasmic portion of the chain corresponds to 1-413 (MAELRRDSTS…HRPFFTYWIT (413 aa)). Positions 283–307 (FESPSDSTMKDVDSKQLDESELTGS) are disordered. Over residues 290 to 300 (TMKDVDSKQLD) the composition is skewed to basic and acidic residues. The chain crosses the membrane as a helical span at residues 414–434 (FVHILITILAVCIYGIAPVGF). Over 435–661 (SQHETVDSVL…PDQFYRLWLS (227 aa)) the chain is Lumenal. The N-linked (GlcNAc...) asparagine glycan is linked to N585. Residues 662–682 (LFLHAGILHCLVSVCFQMTIL) traverse the membrane as a helical segment. The Cytoplasmic portion of the chain corresponds to 683–693 (RDLEKLAGWLR). Residues 694–714 (ISIIYILSGITGNLASAIFLP) form a helical membrane-spanning segment. Residues 715–716 (YR) lie on the Lumenal side of the membrane. A helical transmembrane segment spans residues 717–737 (AEVGPAGSQFGILACLFVELI). Topologically, residues 738–748 (QSWQILAQPWR) are cytoplasmic. A helical membrane pass occupies residues 749 to 769 (AFTKLLCVVLFLFAFGLLPWI). Residues 770–774 (DNFAH) lie on the Lumenal side of the membrane. The helical transmembrane segment at 775–795 (ISGFISGFFLSFAFLPYISFG) threads the bilayer. Topologically, residues 796–805 (RLDMYRKRCQ) are cytoplasmic. Residues 806–826 (IIIFLVVFLGLFAGLVVLFYV) traverse the membrane as a helical segment. Over 827 to 857 (HPIKCEWCELLTCIPFTDKFCEKYDLNAHLH) the chain is Lumenal.

Belongs to the peptidase S54 family.

It localises to the endoplasmic reticulum membrane. The protein resides in the golgi apparatus membrane. Regulates ADAM17 protease, a sheddase of the epidermal growth factor (EGF) receptor ligands and TNF, thereby plays a role in sleep, cell survival, proliferation, migration and inflammation. Does not exhibit any protease activity on its own. This Danio rerio (Zebrafish) protein is Inactive rhomboid protein 1 (rhbdf1).